We begin with the raw amino-acid sequence, 128 residues long: Probable 4-amino-4-deoxy-L-arabinose-phosphoundecaprenol flippase subunit ArnF (128 aa).

Over 1–2 (MG) the chain is Cytoplasmic. Residues 3–23 (LIWGLFSVIIASVAQLSLGFA) form a helical membrane-spanning segment. The Periplasmic portion of the chain corresponds to 24–35 (ASHLPPMTHLWD). The chain crosses the membrane as a helical span at residues 36-56 (FIAALLAFGLDARILLLGLLG). Topologically, residues 57–76 (YLLSVFCWYKTLHKLALSKA) are cytoplasmic. A helical membrane pass occupies residues 77-97 (YALLSMSYVLVWIASMVLPGW). Over 98 to 100 (EGT) the chain is Periplasmic. Residues 101–121 (FSLKALLGVACIMSGLMLIFL) traverse the membrane as a helical segment. Residues 122-128 (PMTKQRY) are Cytoplasmic-facing.

This sequence belongs to the ArnF family. In terms of assembly, heterodimer of ArnE and ArnF.

The protein resides in the cell inner membrane. The protein operates within bacterial outer membrane biogenesis; lipopolysaccharide biosynthesis. Its function is as follows. Translocates 4-amino-4-deoxy-L-arabinose-phosphoundecaprenol (alpha-L-Ara4N-phosphoundecaprenol) from the cytoplasmic to the periplasmic side of the inner membrane. This chain is Probable 4-amino-4-deoxy-L-arabinose-phosphoundecaprenol flippase subunit ArnF, found in Escherichia coli O9:H4 (strain HS).